We begin with the raw amino-acid sequence, 323 residues long: Aspartate carbamoyltransferase catalytic subunit (323 aa).

The carbamoyl phosphate site is built by Arg-55 and Thr-56. Lys-83 contributes to the L-aspartate binding site. Arg-105, His-138, and Gln-141 together coordinate carbamoyl phosphate. Positions 181 and 235 each coordinate L-aspartate. The carbamoyl phosphate site is built by Gly-276 and Pro-277.

It belongs to the aspartate/ornithine carbamoyltransferase superfamily. ATCase family. Heterododecamer (2C3:3R2) of six catalytic PyrB chains organized as two trimers (C3), and six regulatory PyrI chains organized as three dimers (R2).

It catalyses the reaction carbamoyl phosphate + L-aspartate = N-carbamoyl-L-aspartate + phosphate + H(+). The protein operates within pyrimidine metabolism; UMP biosynthesis via de novo pathway; (S)-dihydroorotate from bicarbonate: step 2/3. Catalyzes the condensation of carbamoyl phosphate and aspartate to form carbamoyl aspartate and inorganic phosphate, the committed step in the de novo pyrimidine nucleotide biosynthesis pathway. This is Aspartate carbamoyltransferase catalytic subunit from Corynebacterium aurimucosum (strain ATCC 700975 / DSM 44827 / CIP 107346 / CN-1) (Corynebacterium nigricans).